A 455-amino-acid polypeptide reads, in one-letter code: DNA repair protein RadA (455 aa).

A C4-type zinc finger spans residues 12–29; it reads CSECGSYSPKWLGQCPGC. ATP is bound at residue 95 to 102; that stretch reads GEPGIGKS. Residues 252–256 carry the RadA KNRFG motif motif; sequence KNRFG. The tract at residues 351–455 is lon-protease-like; sequence DVFLSIAGGL…TIKDAVRLLQ (105 aa).

The protein belongs to the RecA family. RadA subfamily.

DNA-dependent ATPase involved in processing of recombination intermediates, plays a role in repairing DNA breaks. Stimulates the branch migration of RecA-mediated strand transfer reactions, allowing the 3' invading strand to extend heteroduplex DNA faster. Binds ssDNA in the presence of ADP but not other nucleotides, has ATPase activity that is stimulated by ssDNA and various branched DNA structures, but inhibited by SSB. Does not have RecA's homology-searching function. This chain is DNA repair protein RadA, found in Chlamydia muridarum (strain MoPn / Nigg).